A 94-amino-acid chain; its full sequence is Exodeoxyribonuclease 7 small subunit (94 aa).

The protein belongs to the XseB family. In terms of assembly, heterooligomer composed of large and small subunits.

The protein localises to the cytoplasm. It carries out the reaction Exonucleolytic cleavage in either 5'- to 3'- or 3'- to 5'-direction to yield nucleoside 5'-phosphates.. In terms of biological role, bidirectionally degrades single-stranded DNA into large acid-insoluble oligonucleotides, which are then degraded further into small acid-soluble oligonucleotides. The chain is Exodeoxyribonuclease 7 small subunit from Ralstonia nicotianae (strain ATCC BAA-1114 / GMI1000) (Ralstonia solanacearum).